The following is a 361-amino-acid chain: Phosphoserine aminotransferase (361 aa).

Position 42 (Arg42) interacts with L-glutamate. Pyridoxal 5'-phosphate contacts are provided by residues 76 to 77, Trp102, Thr152, Asp172, and Gln195; that span reads AT. The residue at position 196 (Lys196) is an N6-(pyridoxal phosphate)lysine. 237–238 contacts pyridoxal 5'-phosphate; sequence NT.

The protein belongs to the class-V pyridoxal-phosphate-dependent aminotransferase family. SerC subfamily. In terms of assembly, homodimer. Requires pyridoxal 5'-phosphate as cofactor.

It localises to the cytoplasm. The enzyme catalyses O-phospho-L-serine + 2-oxoglutarate = 3-phosphooxypyruvate + L-glutamate. It catalyses the reaction 4-(phosphooxy)-L-threonine + 2-oxoglutarate = (R)-3-hydroxy-2-oxo-4-phosphooxybutanoate + L-glutamate. It functions in the pathway amino-acid biosynthesis; L-serine biosynthesis; L-serine from 3-phospho-D-glycerate: step 2/3. The protein operates within cofactor biosynthesis; pyridoxine 5'-phosphate biosynthesis; pyridoxine 5'-phosphate from D-erythrose 4-phosphate: step 3/5. Its function is as follows. Catalyzes the reversible conversion of 3-phosphohydroxypyruvate to phosphoserine and of 3-hydroxy-2-oxo-4-phosphonooxybutanoate to phosphohydroxythreonine. The sequence is that of Phosphoserine aminotransferase from Xanthomonas campestris pv. campestris (strain 8004).